Reading from the N-terminus, the 185-residue chain is Ribosome-recycling factor (185 aa).

It belongs to the RRF family.

The protein localises to the cytoplasm. Responsible for the release of ribosomes from messenger RNA at the termination of protein biosynthesis. May increase the efficiency of translation by recycling ribosomes from one round of translation to another. The chain is Ribosome-recycling factor from Treponema denticola (strain ATCC 35405 / DSM 14222 / CIP 103919 / JCM 8153 / KCTC 15104).